A 268-amino-acid polypeptide reads, in one-letter code: Cytochrome b-c1 complex subunit Rieske-5, mitochondrial (268 aa).

Residues 1-56 (MLRIAGRKLSSSAAARSSSAFFTRNPFTFTDDSSSPTRSPSPTSLASQFLDQFRGF) constitute a mitochondrion transit peptide. At 57–105 (SSNSVSPAHQTGLVSDLPATVAAIKNPSSKIVYDDSNHERYPPGDPSKR) the chain is on the mitochondrial matrix side. A helical transmembrane segment spans residues 106–128 (AFAYFVLTGGRFVYASLVRLLIL). The Mitochondrial intermembrane segment spans residues 129–268 (KFVLSMSASK…FMEENKLLIG (140 aa)). The 89-residue stretch at 178-266 (INLANSVDLG…YSFMEENKLL (89 aa)) folds into the Rieske domain. [2Fe-2S] cluster is bound by residues C211, H213, C230, and H233. Cysteines 216 and 232 form a disulfide.

It belongs to the Rieske iron-sulfur protein family. As to quaternary structure, component of the ubiquinol-cytochrome c oxidoreductase (cytochrome b-c1 complex, complex III, CIII), a multisubunit enzyme composed of 3 respiratory subunits cytochrome b, cytochrome c1 and Rieske protein, 2 core protein subunits, and several low-molecular weight protein subunits. The complex exists as an obligatory dimer and forms supercomplexes (SCs) in the inner mitochondrial membrane with cytochrome c oxidase (complex IV, CIV). [2Fe-2S] cluster is required as a cofactor. As to expression, high levels are seen in the flowers while a low level expression is seen in the roots, leaves and stems.

The protein localises to the mitochondrion inner membrane. It catalyses the reaction a quinol + 2 Fe(III)-[cytochrome c](out) = a quinone + 2 Fe(II)-[cytochrome c](out) + 2 H(+)(out). Functionally, component of the ubiquinol-cytochrome c oxidoreductase, a multisubunit transmembrane complex that is part of the mitochondrial electron transport chain which drives oxidative phosphorylation. The respiratory chain contains 3 multisubunit complexes succinate dehydrogenase (complex II, CII), ubiquinol-cytochrome c oxidoreductase (cytochrome b-c1 complex, complex III, CIII) and cytochrome c oxidase (complex IV, CIV), that cooperate to transfer electrons derived from NADH and succinate to molecular oxygen, creating an electrochemical gradient over the inner membrane that drives transmembrane transport and the ATP synthase. The cytochrome b-c1 complex catalyzes electron transfer from ubiquinol to cytochrome c, linking this redox reaction to translocation of protons across the mitochondrial inner membrane, with protons being carried across the membrane as hydrogens on the quinol. In the process called Q cycle, 2 protons are consumed from the matrix, 4 protons are released into the intermembrane space and 2 electrons are passed to cytochrome c. The Rieske protein is a catalytic core subunit containing a [2Fe-2S] iron-sulfur cluster. It cycles between 2 conformational states during catalysis to transfer electrons from the quinol bound in the Q(0) site in cytochrome b to cytochrome c1. This chain is Cytochrome b-c1 complex subunit Rieske-5, mitochondrial, found in Nicotiana tabacum (Common tobacco).